Reading from the N-terminus, the 297-residue chain is Thiosulfate sulfurtransferase (297 aa).

An N6-acetyllysine; alternate modification is found at lysine 14. At lysine 14 the chain carries N6-succinyllysine; alternate. In terms of domain architecture, Rhodanese 1 spans valine 25–serine 143. An O-linked (GlcNAc) serine glycan is attached at serine 35. Serine 38 is modified (phosphoserine). An N6-acetyllysine; alternate modification is found at lysine 136. N6-succinyllysine; alternate is present on lysine 136. A hinge region spans residues glutamate 144 to arginine 159. Position 163 is an N6-acetyllysine (lysine 163). Positions glutamate 173–tryptophan 288 constitute a Rhodanese 2 domain. Lysine 175 is modified (N6-acetyllysine; alternate). Lysine 175 carries the N6-succinyllysine; alternate modification. Arginine 187 provides a ligand contact to substrate. N6-acetyllysine; alternate is present on lysine 224. An N6-succinyllysine; alternate modification is found at lysine 224. Lysine 236 is subject to N6-acetyllysine. Lysine 237 is modified (N6-acetyllysine; alternate). Residue lysine 237 is modified to N6-succinyllysine; alternate. Catalysis depends on cysteine 248, which acts as the Cysteine persulfide intermediate. Lysine 250 is a binding site for substrate.

Monomer. As to expression, expressed in numerous tissues.

Its subcellular location is the mitochondrion matrix. The enzyme catalyses thiosulfate + hydrogen cyanide = thiocyanate + sulfite + 2 H(+). In terms of biological role, together with MRPL18, acts as a mitochondrial import factor for the cytosolic 5S rRNA. Only the nascent unfolded cytoplasmic form is able to bind to the 5S rRNA. Formation of iron-sulfur complexes and cyanide detoxification. Binds molecular oxygen and sulfur. The protein is Thiosulfate sulfurtransferase (TST) of Bos taurus (Bovine).